The following is a 955-amino-acid chain: Eukaryotic translation initiation factor 3 subunit A (955 aa).

The stretch at 96 to 127 (LSLAEQRVTDAQAQADKIADEEEADDLEAEET) forms a coiled coil. The region spanning 325–498 (YQRVASFVLL…RSVLFEEVRA (174 aa)) is the PCI domain. Coiled-coil stretches lie at residues 533–636 (AEAR…INAK) and 752–860 (KREA…KRAG). Positions 789 to 858 (RAEEEAKAAA…ELEAKLEAKR (70 aa)) are enriched in basic and acidic residues. The disordered stretch occupies residues 789-955 (RAEEEAKAAA…GRYIPPSQRN (167 aa)).

The protein belongs to the eIF-3 subunit A family. Component of the eukaryotic translation initiation factor 3 (eIF-3) complex.

The protein localises to the cytoplasm. RNA-binding component of the eukaryotic translation initiation factor 3 (eIF-3) complex, which is involved in protein synthesis of a specialized repertoire of mRNAs and, together with other initiation factors, stimulates binding of mRNA and methionyl-tRNAi to the 40S ribosome. The eIF-3 complex specifically targets and initiates translation of a subset of mRNAs involved in cell proliferation. This is Eukaryotic translation initiation factor 3 subunit A from Yarrowia lipolytica (strain CLIB 122 / E 150) (Yeast).